The sequence spans 239 residues: Sugar fermentation stimulation protein homolog (239 aa).

The protein belongs to the SfsA family.

This chain is Sugar fermentation stimulation protein homolog, found in Caulobacter vibrioides (strain ATCC 19089 / CIP 103742 / CB 15) (Caulobacter crescentus).